We begin with the raw amino-acid sequence, 130 residues long: Small ribosomal subunit protein uS11 (130 aa).

Belongs to the universal ribosomal protein uS11 family. In terms of assembly, part of the 30S ribosomal subunit. Interacts with proteins S7 and S18. Binds to IF-3.

Functionally, located on the platform of the 30S subunit, it bridges several disparate RNA helices of the 16S rRNA. Forms part of the Shine-Dalgarno cleft in the 70S ribosome. In Syntrophus aciditrophicus (strain SB), this protein is Small ribosomal subunit protein uS11.